The primary structure comprises 311 residues: Putative HTH-type transcriptional regulatory protein MTH_967 (311 aa).

Residues 134 to 192 (LREVREEYNLSLKDLADLAHVSRKTIYKYENGLARASAETAMILEEILNIRITLSIDIF) enclose the HTH cro/C1-type domain. A DNA-binding region (H-T-H motif) is located at residues 145-164 (LKDLADLAHVSRKTIYKYEN).

The protein is Putative HTH-type transcriptional regulatory protein MTH_967 of Methanothermobacter thermautotrophicus (strain ATCC 29096 / DSM 1053 / JCM 10044 / NBRC 100330 / Delta H) (Methanobacterium thermoautotrophicum).